The following is a 466-amino-acid chain: L-seryl-tRNA(Sec) selenium transferase (466 aa).

Lys293 is subject to N6-(pyridoxal phosphate)lysine.

It belongs to the SelA family. The cofactor is pyridoxal 5'-phosphate.

The protein localises to the cytoplasm. It catalyses the reaction L-seryl-tRNA(Sec) + selenophosphate + H(+) = L-selenocysteinyl-tRNA(Sec) + phosphate. Its pathway is aminoacyl-tRNA biosynthesis; selenocysteinyl-tRNA(Sec) biosynthesis; selenocysteinyl-tRNA(Sec) from L-seryl-tRNA(Sec) (bacterial route): step 1/1. In terms of biological role, converts seryl-tRNA(Sec) to selenocysteinyl-tRNA(Sec) required for selenoprotein biosynthesis. The protein is L-seryl-tRNA(Sec) selenium transferase of Desulfotalea psychrophila (strain LSv54 / DSM 12343).